A 259-amino-acid chain; its full sequence is FAD-linked sulfhydryl oxidase (259 aa).

The protein belongs to the baculoviridae p33 family. In terms of assembly, homodimer.

The protein resides in the host cytoplasm. The protein localises to the host nucleus. The enzyme catalyses 2 R'C(R)SH + O2 = R'C(R)S-S(R)CR' + H2O2. Functional FAD-linked sulfhydryl oxidase that is required for infectious budded virion (BV) production and for the formation of enveloped occluded virion (ODV). The chain is FAD-linked sulfhydryl oxidase (P33) from Lepidoptera (butterflies and moths).